Consider the following 457-residue polypeptide: Putative F-box protein At3g58860 (457 aa).

Residues 6 to 54 enclose the F-box domain; sequence MDLFSKLPDEVISHILSSLPTKEAASTSVLAKKWRYLFAFVPSLDFNDS.

This is Putative F-box protein At3g58860 from Arabidopsis thaliana (Mouse-ear cress).